The primary structure comprises 325 residues: Putative 1-aminocyclopropane-1-carboxylate deaminase (325 aa).

Position 54 is an N6-(pyridoxal phosphate)lysine (lysine 54).

It belongs to the ACC deaminase/D-cysteine desulfhydrase family. Pyridoxal 5'-phosphate is required as a cofactor.

The catalysed reaction is 1-aminocyclopropane-1-carboxylate + H2O = 2-oxobutanoate + NH4(+). The sequence is that of Putative 1-aminocyclopropane-1-carboxylate deaminase from Pyrococcus horikoshii (strain ATCC 700860 / DSM 12428 / JCM 9974 / NBRC 100139 / OT-3).